Here is a 609-residue protein sequence, read N- to C-terminus: Zinc metalloproteinase-disintegrin-like VMP-III (609 aa).

An N-terminal signal peptide occupies residues 1-20 (MIQVLLVTICLAAFPYQGSS). Residues 21–189 (IILESGNVND…KKASQLVVTA (169 aa)) constitute a propeptide that is removed on maturation. One can recognise a Peptidase M12B domain in the interval 198 to 393 (RFVELFLVVD…HNPECILNEP (196 aa)). Residues E201 and D285 each coordinate Ca(2+). 3 disulfide bridges follow: C308–C388, C348–C372, and C350–C355. Zn(2+) is bound at residue H333. The active site involves E334. The Zn(2+) site is built by H337 and H343. N371 carries N-linked (GlcNAc...) asparagine glycosylation. Residues C388, N391, V403, N406, L408, E410, E413, and D416 each coordinate Ca(2+). The region spanning 401–487 (PPVCGNELLE…ECPADVFHKN (87 aa)) is the Disintegrin domain. 14 cysteine pairs are disulfide-bonded: C404–C433, C415–C428, C417–C423, C427–C450, C441–C447, C446–C472, C459–C479, C466–C498, C491–C503, C510–C560, C525–C571, C538–C548, C555–C597, and C591–C602. The D/ECD-tripeptide signature appears at 465–467 (ECD). Residues D467, P468, E470, D482, and V483 each coordinate Ca(2+).

This sequence belongs to the venom metalloproteinase (M12B) family. P-III subfamily. P-IIIa sub-subfamily. As to quaternary structure, monomer. Zn(2+) serves as cofactor. Expressed by the venom gland.

The protein localises to the secreted. In terms of biological role, snake venom metalloproteinase that impairs hemostasis in the envenomed animal. The polypeptide is Zinc metalloproteinase-disintegrin-like VMP-III (Crotalus viridis viridis (Prairie rattlesnake)).